Consider the following 507-residue polypeptide: Blue light receptor lreB (507 aa).

Positions 170–234 (RVLNEMKDML…EEMNECITTT (65 aa)) constitute a PAS domain. The segment at 463–488 (CTDCGTSDSPEWRKGPEGPKTLCNAC) adopts a GATA-type zinc-finger fold.

Its function is as follows. Probable transcription factor involved in light regulation. Plays crucial roles in fungal growth and asexual development. Involved in conidiophore formation, sclerotium production, and conidial stress tolerance. Positively regulates the fungal pathogenicity towards maize and aflatoxin B1 production. The chain is Blue light receptor lreB from Aspergillus flavus.